A 98-amino-acid polypeptide reads, in one-letter code: NADH-ubiquinone oxidoreductase chain 4L (98 aa).

3 helical membrane-spanning segments follow: residues 2-22, 29-49, and 61-81; these read TLTTMNILLAFFFSLLGTLIF, TLLCLEGMMLSLFIMTTITAL, and ITTLVFAACEAAVGLALLTMV.

Belongs to the complex I subunit 4L family. As to quaternary structure, core subunit of respiratory chain NADH dehydrogenase (Complex I) which is composed of 45 different subunits.

The protein localises to the mitochondrion inner membrane. It carries out the reaction a ubiquinone + NADH + 5 H(+)(in) = a ubiquinol + NAD(+) + 4 H(+)(out). In terms of biological role, core subunit of the mitochondrial membrane respiratory chain NADH dehydrogenase (Complex I) which catalyzes electron transfer from NADH through the respiratory chain, using ubiquinone as an electron acceptor. Part of the enzyme membrane arm which is embedded in the lipid bilayer and involved in proton translocation. The protein is NADH-ubiquinone oxidoreductase chain 4L (MT-ND4L) of Oxymycterus rufus (Red hocicudo).